A 686-amino-acid polypeptide reads, in one-letter code: Leucine-rich repeat-containing protein 49 (686 aa).

LRR repeat units follow at residues 113–134 (HLRL…SNLQ), 135–156 (KLIS…STLR), 157–178 (CLRV…ENLK), 179–200 (SLDV…NHLC), 201–222 (ELRV…NGLD), 223–244 (SLTE…DNLP), and 245–266 (CLQH…SCLA). The LRRCT domain maps to 279 to 317 (NPIAQESWYKHTVLQNMMQLRQLDMKRITEEERRMASVL). Positions 303–341 (MKRITEEERRMASVLAKKEEEKKRESHKQSLLKEKKRLT) form a coiled coil. The interval 360 to 388 (ATNEDRKDSDSPQDPCQIDGSTLSAFPEE) is disordered.

In terms of assembly, part of the neuronal tubulin polyglutamylase complex which contains TPGS1, TPGS2, TTLL1, LRRC49 and NICN1. Interacts with PCM1; TTLL1, TPGS1, TPGS2 and LRRC49.

The protein resides in the cytoplasm. The protein localises to the cytoskeleton. It is found in the microtubule organizing center. Its subcellular location is the centrosome. It localises to the centriolar satellite. Its function is as follows. Subunit of the tubulin polyglutamylase complex (TPGC). The complex mediates cilia and flagella polyglutamylation which is essential for their biogenesis and motility. The polypeptide is Leucine-rich repeat-containing protein 49 (Homo sapiens (Human)).